The following is a 204-amino-acid chain: Large ribosomal subunit protein uL4 (204 aa).

The interval alanine 49 to glycine 74 is disordered. Residues valine 55–alanine 71 are compositionally biased toward gly residues.

Belongs to the universal ribosomal protein uL4 family. In terms of assembly, part of the 50S ribosomal subunit.

Functionally, one of the primary rRNA binding proteins, this protein initially binds near the 5'-end of the 23S rRNA. It is important during the early stages of 50S assembly. It makes multiple contacts with different domains of the 23S rRNA in the assembled 50S subunit and ribosome. Its function is as follows. Forms part of the polypeptide exit tunnel. The protein is Large ribosomal subunit protein uL4 of Wolinella succinogenes (strain ATCC 29543 / DSM 1740 / CCUG 13145 / JCM 31913 / LMG 7466 / NCTC 11488 / FDC 602W) (Vibrio succinogenes).